Consider the following 246-residue polypeptide: NAD-dependent protein deacetylase (246 aa).

The Deacetylase sirtuin-type domain maps to 1–246; sequence MKKPDIQQLK…VIEEIVNSNS (246 aa). Ala25, Phe36, Arg37, Gln106, Ile108, Asp109, and His124 together coordinate NAD(+). A nicotinamide-binding site is contributed by Phe36. The nicotinamide site is built by Ile108 and Asp109. The active-site Proton acceptor is His124. Zn(2+) contacts are provided by Cys132, Cys135, Cys152, and Cys155. NAD(+)-binding residues include Ser193, Ser194, Asn216, and Asp233.

Belongs to the sirtuin family. Class U subfamily. Zn(2+) serves as cofactor.

It is found in the cytoplasm. The enzyme catalyses N(6)-acetyl-L-lysyl-[protein] + NAD(+) + H2O = 2''-O-acetyl-ADP-D-ribose + nicotinamide + L-lysyl-[protein]. Functionally, NAD-dependent protein deacetylase which modulates the activities of several enzymes which are inactive in their acetylated form. This is NAD-dependent protein deacetylase from Staphylococcus epidermidis (strain ATCC 12228 / FDA PCI 1200).